Reading from the N-terminus, the 622-residue chain is 1-deoxy-D-xylulose-5-phosphate synthase (622 aa).

Residues His-80 and 121–123 contribute to the thiamine diphosphate site; that span reads GHS. Position 152 (Asp-152) interacts with Mg(2+). Residues 153–154, Asn-181, Tyr-288, and Glu-369 contribute to the thiamine diphosphate site; that span reads GA. Residue Asn-181 coordinates Mg(2+).

The protein belongs to the transketolase family. DXPS subfamily. Homodimer. Mg(2+) is required as a cofactor. Requires thiamine diphosphate as cofactor.

It carries out the reaction D-glyceraldehyde 3-phosphate + pyruvate + H(+) = 1-deoxy-D-xylulose 5-phosphate + CO2. It functions in the pathway metabolic intermediate biosynthesis; 1-deoxy-D-xylulose 5-phosphate biosynthesis; 1-deoxy-D-xylulose 5-phosphate from D-glyceraldehyde 3-phosphate and pyruvate: step 1/1. Catalyzes the acyloin condensation reaction between C atoms 2 and 3 of pyruvate and glyceraldehyde 3-phosphate to yield 1-deoxy-D-xylulose-5-phosphate (DXP). This Psychromonas ingrahamii (strain DSM 17664 / CCUG 51855 / 37) protein is 1-deoxy-D-xylulose-5-phosphate synthase.